The following is an 88-amino-acid chain: MEQASFVVIDETGIHARPATLLVQAASKYSSDVQIEYTGKKVNLKSIMGVMSLGIGKGADITIYTEGSDEKEAIEGLTEVLKKEGLAE.

The HPr domain occupies 1 to 88 (MEQASFVVID…EVLKKEGLAE (88 aa)). Catalysis depends on histidine 15, which acts as the Pros-phosphohistidine intermediate. Serine 46 is modified (phosphoserine; by HPrK/P).

This sequence belongs to the HPr family.

The protein localises to the cytoplasm. Phosphorylation on Ser-46 inhibits the phosphoryl transfer from enzyme I to HPr. In terms of biological role, general (non sugar-specific) component of the phosphoenolpyruvate-dependent sugar phosphotransferase system (sugar PTS). This major carbohydrate active-transport system catalyzes the phosphorylation of incoming sugar substrates concomitantly with their translocation across the cell membrane. The phosphoryl group from phosphoenolpyruvate (PEP) is transferred to the phosphoryl carrier protein HPr by enzyme I. Phospho-HPr then transfers it to the PTS EIIA domain. Its function is as follows. P-Ser-HPr interacts with the catabolite control protein A (CcpA), forming a complex that binds to DNA at the catabolite response elements cre, operator sites preceding a large number of catabolite-regulated genes. Thus, P-Ser-HPr is a corepressor in carbon catabolite repression (CCR), a mechanism that allows bacteria to coordinate and optimize the utilization of available carbon sources. P-Ser-HPr also plays a role in inducer exclusion, in which it probably interacts with several non-PTS permeases and inhibits their transport activity. The protein is Phosphocarrier protein HPr (ptsH) of Listeria monocytogenes serovar 1/2a (strain ATCC BAA-679 / EGD-e).